A 131-amino-acid polypeptide reads, in one-letter code: Heat shock protein 15 homolog (131 aa).

The 62-residue stretch at 6-67 folds into the S4 RNA-binding domain; it reads VRLDKWLWAA…NEEKEIKIIA (62 aa). Residues 98-131 are disordered; sequence ARKNNSLSMPHPDRRPNKKERRDLLKFKHQDKFE. A compositionally biased stretch (basic and acidic residues) spans 108–131; sequence HPDRRPNKKERRDLLKFKHQDKFE.

Belongs to the HSP15 family.

Its function is as follows. Involved in the recycling of free 50S ribosomal subunits that still carry a nascent chain. Binds RNA more specifically than DNA. Binds with very high affinity to the free 50S ribosomal subunit. Does not bind it when it is part of the 70S ribosome. The protein is Heat shock protein 15 homolog (hslR) of Haemophilus influenzae (strain ATCC 51907 / DSM 11121 / KW20 / Rd).